We begin with the raw amino-acid sequence, 323 residues long: MACLKGAKGTVQDAPDFNDKEDAETLRHAMKGLGTDEDTILKLLISRSNKQRQQIALTYKTLFGRDLTDDLKSELSGKFETLLVALMVPAHLYDACELRNAIKGLGTLENVIIEIMASRTAAEVKNIKETYKKEFDSDLEKDIVGDTSGNFERLLVSLVQANRDPVGKVDEGQVENDAKALFDAGENKWGTDEETFISILSTRGVGHLRKVFDQYMTISGYQIEESIQSETGGHFEKLLLAVVKSIRSIQGYLAEVLYNSMKGAGTDDQTLIRVLVSRSEIDLFNIRQTFRKHYGKSLHAMIQSDTSGDYRNALLLLCGEIDD.

Annexin repeat units lie at residues 17-88, 89-160, 172-244, and 248-319; these read FNDK…ALMV, PAHL…SLVQ, GQVE…AVVK, and SIQG…LLCG.

This sequence belongs to the annexin family.

Functionally, calcium/phospholipid-binding protein which promotes membrane fusion and is involved in exocytosis. The polypeptide is Annexin A5 (Cynops pyrrhogaster (Japanese fire-bellied newt)).